Consider the following 351-residue polypeptide: uncharacterized protein (351 aa).

Zn(2+) is bound by residues His-23, His-25, Lys-151, His-184, His-212, and Asp-270. Lys-151 is subject to N6-carboxylysine.

This sequence belongs to the metallo-dependent hydrolases superfamily. Phosphotriesterase family. The cofactor is Zn(2+).

This is an uncharacterized protein from Mycoplasma pneumoniae (strain ATCC 29342 / M129 / Subtype 1) (Mycoplasmoides pneumoniae).